We begin with the raw amino-acid sequence, 62 residues long: Large ribosomal subunit protein bL33 (62 aa).

This sequence belongs to the bacterial ribosomal protein bL33 family.

In Phocaeicola vulgatus (strain ATCC 8482 / DSM 1447 / JCM 5826 / CCUG 4940 / NBRC 14291 / NCTC 11154) (Bacteroides vulgatus), this protein is Large ribosomal subunit protein bL33.